A 102-amino-acid chain; its full sequence is MVSVTEIITYGREAIERIICKYFKDSKIEKILFLPSEEDVKAKYIIGRVGFIRISNTWSGIVVVDGVQIPFVAEVHLNGKIDIYLYPQKDFYLAHLVGELNG.

Essential for virus function. This is an uncharacterized protein from Saccharolobus solfataricus (Sulfolobus solfataricus).